The chain runs to 373 residues: Enoyl-[acyl-carrier-protein] reductase, mitochondrial (373 aa).

A mitochondrion-targeting transit peptide spans 1 to 53; that stretch reads MLVSRRLTGARARAPLLASLLEAWCRQGRTTSSYSAFSEPSHVRALVYGNHGD. Lys-61 carries the N6-acetyllysine; alternate modification. The residue at position 61 (Lys-61) is an N6-succinyllysine; alternate. The active-site Proton donor is the Tyr-94. NADP(+) contacts are provided by residues Asn-167, 193–196, and 216–218; these read NSGV and RDR. 2 positions are modified to N6-acetyllysine; alternate: Lys-252 and Lys-267. 2 positions are modified to N6-succinyllysine; alternate: Lys-252 and Lys-267. Residues 285–288 and 310–312 each bind NADP(+); these read YGGM and FWL. Lys-316 is modified (N6-succinyllysine). Lys-368 contacts NADP(+).

This sequence belongs to the zinc-containing alcohol dehydrogenase family. Quinone oxidoreductase subfamily. Homodimer. As to quaternary structure, interacts with PPARA in the nucleus and increases its activity.

The protein localises to the mitochondrion. Its subcellular location is the cytoplasm. It is found in the nucleus. It carries out the reaction a 2,3-saturated acyl-[ACP] + NADP(+) = a (2E)-enoyl-[ACP] + NADPH + H(+). The enzyme catalyses (2E)-butenoyl-[ACP] + NADPH + H(+) = butanoyl-[ACP] + NADP(+). The catalysed reaction is (2E)-hexenoyl-[ACP] + NADPH + H(+) = hexanoyl-[ACP] + NADP(+). It catalyses the reaction (2E)-octenoyl-[ACP] + NADPH + H(+) = octanoyl-[ACP] + NADP(+). It carries out the reaction (2E)-decenoyl-[ACP] + NADPH + H(+) = decanoyl-[ACP] + NADP(+). The enzyme catalyses (2E)-dodecenoyl-[ACP] + NADPH + H(+) = dodecanoyl-[ACP] + NADP(+). The catalysed reaction is (2E)-tetradecenoyl-[ACP] + NADPH + H(+) = tetradecanoyl-[ACP] + NADP(+). It catalyses the reaction (2E)-hexadecenoyl-[ACP] + NADPH + H(+) = hexadecanoyl-[ACP] + NADP(+). Catalyzes the NADPH-dependent reduction of trans-2-enoyl thioesters in mitochondrial fatty acid synthesis (fatty acid synthesis type II). Fatty acid chain elongation in mitochondria uses acyl carrier protein (ACP) as an acyl group carrier, but the enzyme accepts both ACP and CoA thioesters as substrates in vitro. Displays a preference for medium-chain over short- and long-chain substrates. May provide the octanoyl chain used for lipoic acid biosynthesis, regulating protein lipoylation and mitochondrial respiratory activity particularly in Purkinje cells. Involved in iron homeostasis; affecting Fe-S cluster assembly and ceramide metabolism. Required for proper morphology and bioenergetic functions of mitochondria. Required for maintenance of neurons. The sequence is that of Enoyl-[acyl-carrier-protein] reductase, mitochondrial (Mecr) from Rattus norvegicus (Rat).